The chain runs to 110 residues: Large ribosomal subunit protein P1B (110 aa).

The span at 69-85 shows a compositional bias: low complexity; that stretch reads PAAGGAGAPAAAAGGEA. Residues 69 to 110 form a disordered region; that stretch reads PAAGGAGAPAAAAGGEAAAEEQKEEAKEEEESDEDMGFGLFD. Acidic residues predominate over residues 95 to 104; that stretch reads KEEEESDEDM.

The protein belongs to the eukaryotic ribosomal protein P1/P2 family. In terms of assembly, component of the large ribosomal subunit (LSU). Mature yeast ribosomes consist of a small (40S) and a large (60S) subunit. The 40S small subunit contains 1 molecule of ribosomal RNA (18S rRNA) and at least 33 different proteins. The large 60S subunit contains 3 rRNA molecules (25S, 5.8S and 5S rRNA) and at least 46 different proteins. The acidic ribosomal P-proteins form the stalk structure of the 60S subunit. They are organized as a pentameric complex in which uL10/P0 interacts with 2 heterodimers of P1 and P2 proteins.

It is found in the cytoplasm. Its function is as follows. Component of the ribosome, a large ribonucleoprotein complex responsible for the synthesis of proteins in the cell. The small ribosomal subunit (SSU) binds messenger RNAs (mRNAs) and translates the encoded message by selecting cognate aminoacyl-transfer RNA (tRNA) molecules. The large subunit (LSU) contains the ribosomal catalytic site termed the peptidyl transferase center (PTC), which catalyzes the formation of peptide bonds, thereby polymerizing the amino acids delivered by tRNAs into a polypeptide chain. The nascent polypeptides leave the ribosome through a tunnel in the LSU and interact with protein factors that function in enzymatic processing, targeting, and the membrane insertion of nascent chains at the exit of the ribosomal tunnel. This chain is Large ribosomal subunit protein P1B (rpp102), found in Schizosaccharomyces pombe (strain 972 / ATCC 24843) (Fission yeast).